We begin with the raw amino-acid sequence, 160 residues long: MIKKRKKKSYTEVYALGQYISMSAHKARRVIDQIRGRSYEEALMILELMPYRGCYPIFKLVYSAAANASHNKGFKETNLVISKAEVNQGNTVKKLKPRARGRSYPIKRSTCHITIVLEDISFYQQYEEYLMYLKKPGCSNENRNLTCYDTYSSGGLWDKK.

The protein belongs to the universal ribosomal protein uL22 family. Part of the 50S ribosomal subunit.

It localises to the plastid. Its subcellular location is the chloroplast. Its function is as follows. This protein binds specifically to 23S rRNA. The globular domain of the protein is located near the polypeptide exit tunnel on the outside of the subunit, while an extended beta-hairpin is found that lines the wall of the exit tunnel in the center of the 70S ribosome. This chain is Large ribosomal subunit protein uL22c (rpl22), found in Arabidopsis thaliana (Mouse-ear cress).